The sequence spans 483 residues: Adenylyltransferase and sulfurtransferase uba4 (483 aa).

ATP-binding positions include G100, D121, 128–132 (SNLHR), K145, and 178–179 (DN). C227 and C230 together coordinate Zn(2+). C244 (glycyl thioester intermediate; for adenylyltransferase activity) is an active-site residue. The Zn(2+) site is built by C306 and C309. Residues 366–481 (ISKEPTIIDV…WREQIDPDWP (116 aa)) enclose the Rhodanese domain. Catalysis depends on C436, which acts as the Cysteine persulfide intermediate; for sulfurtransferase activity.

This sequence in the N-terminal section; belongs to the HesA/MoeB/ThiF family. UBA4 subfamily. The cofactor is Zn(2+).

The protein resides in the cytoplasm. Its subcellular location is the cytosol. It carries out the reaction [molybdopterin-synthase sulfur-carrier protein]-C-terminal Gly-Gly + ATP + H(+) = [molybdopterin-synthase sulfur-carrier protein]-C-terminal Gly-Gly-AMP + diphosphate. The catalysed reaction is [molybdopterin-synthase sulfur-carrier protein]-C-terminal Gly-Gly-AMP + S-sulfanyl-L-cysteinyl-[cysteine desulfurase] + AH2 = [molybdopterin-synthase sulfur-carrier protein]-C-terminal-Gly-aminoethanethioate + L-cysteinyl-[cysteine desulfurase] + A + AMP + 2 H(+). Its pathway is tRNA modification; 5-methoxycarbonylmethyl-2-thiouridine-tRNA biosynthesis. In terms of biological role, plays a central role in 2-thiolation of mcm(5)S(2)U at tRNA wobble positions of cytosolic tRNA(Lys), tRNA(Glu) and tRNA(Gln). Also essential during biosynthesis of the molybdenum cofactor. Acts by mediating the C-terminal thiocarboxylation of sulfur carriers urm1 and mocs2a. Its N-terminus first activates urm1 and mocs2a as acyl-adenylates (-COAMP), then the persulfide sulfur on the catalytic cysteine is transferred to urm1 and mocs2a to form thiocarboxylation (-COSH) of their C-terminus. The reaction probably involves hydrogen sulfide that is generated from the persulfide intermediate and that acts as a nucleophile towards urm1 and mocs2a. Subsequently, a transient disulfide bond is formed. Does not use thiosulfate as sulfur donor; nfs1 probably acting as a sulfur donor for thiocarboxylation reactions. In Neosartorya fischeri (strain ATCC 1020 / DSM 3700 / CBS 544.65 / FGSC A1164 / JCM 1740 / NRRL 181 / WB 181) (Aspergillus fischerianus), this protein is Adenylyltransferase and sulfurtransferase uba4.